We begin with the raw amino-acid sequence, 165 residues long: Regulator of ribonuclease activity A (165 aa).

The protein belongs to the RraA family. In terms of assembly, homotrimer. Binds to both RNA-binding sites in the C-terminal region of Rne and to RhlB.

The protein resides in the cytoplasm. Functionally, globally modulates RNA abundance by binding to RNase E (Rne) and regulating its endonucleolytic activity. Can modulate Rne action in a substrate-dependent manner by altering the composition of the degradosome. Modulates RNA-binding and helicase activities of the degradosome. In Actinobacillus pleuropneumoniae serotype 7 (strain AP76), this protein is Regulator of ribonuclease activity A.